The chain runs to 434 residues: Tryptamine hydroxycinnamoyltransferase 2 (434 aa).

Active-site proton acceptor residues include histidine 154 and aspartate 380.

Belongs to the plant acyltransferase family.

Functionally, hydroxycinnamoyl transferase that catalyzes the transfer of an acyl from p-coumaryol-CoA to tryptamine, to produce coumaroyl tryptamine. Serotonin and tyramine serve as acyl acceptors in vitro. Can use caffeoyl-CoA, and to a lesser extent feruloyl-CoA, as acyl donors. This chain is Tryptamine hydroxycinnamoyltransferase 2, found in Oryza sativa subsp. japonica (Rice).